The chain runs to 144 residues: Putative pre-16S rRNA nuclease (144 aa).

Belongs to the YqgF nuclease family.

It is found in the cytoplasm. Functionally, could be a nuclease involved in processing of the 5'-end of pre-16S rRNA. The chain is Putative pre-16S rRNA nuclease from Lactiplantibacillus plantarum (strain ATCC BAA-793 / NCIMB 8826 / WCFS1) (Lactobacillus plantarum).